A 553-amino-acid polypeptide reads, in one-letter code: ATP synthase F(1) complex subunit alpha, mitochondrial (553 aa).

A mitochondrion-targeting transit peptide spans 1–43; it reads MLSVRIAAAVARALPRRAGLVSKNALGSSFVGTRNLHASNTRL. Phosphoserine is present on residues S53 and S65. S76 carries the post-translational modification Phosphoserine; alternate. An O-linked (GlcNAc) serine; alternate glycan is attached at S76. At S106 the chain carries Phosphoserine. 3 positions are modified to N6-acetyllysine: K123, K126, and K132. Position 134 is a phosphothreonine (T134). K161 is subject to N6-acetyllysine; alternate. K161 is subject to N6-succinyllysine; alternate. Phosphoserine is present on S166. K167 is modified (N6-acetyllysine; alternate). K167 carries the N6-succinyllysine; alternate modification. Residue S184 is modified to Phosphoserine. At R204 the chain carries Omega-N-methylarginine. Positions 215, 217, 218, 219, and 220 each coordinate ATP. Mg(2+) is bound at residue T219. N6-acetyllysine; alternate occurs at positions 230 and 239. N6-succinyllysine; alternate occurs at positions 230 and 239. The residue at position 240 (K240) is an N6-acetyllysine. K261 and K305 each carry N6-acetyllysine; alternate. N6-succinyllysine; alternate is present on residues K261 and K305. Mg(2+) is bound at residue D312. An N6-acetyllysine; alternate modification is found at K427. An N6-succinyllysine; alternate modification is found at K427. K434 bears the N6-acetyllysine mark. Positions 473 and 475 each coordinate ATP. 4 positions are modified to N6-acetyllysine; alternate: K498, K506, K531, and K539. 4 positions are modified to N6-succinyllysine; alternate: K498, K506, K531, and K539. Position 541 is an N6-acetyllysine (K541).

It belongs to the ATPase alpha/beta chains family. Homotrimer. Component of the ATP synthase complex composed at least of ATP5F1A/subunit alpha, ATP5F1B/subunit beta, ATP5MC1/subunit c (homooctomer), MT-ATP6/subunit a, MT-ATP8/subunit 8, ATP5ME/subunit e, ATP5MF/subunit f, ATP5MG/subunit g, ATP5MK/subunit k, ATP5MJ/subunit j, ATP5F1C/subunit gamma, ATP5F1D/subunit delta, ATP5F1E/subunit epsilon, ATP5PF/subunit F6, ATP5PB/subunit b, ATP5PD/subunit d, ATP5PO/subunit OSCP. ATP synthase complex consists of a soluble F(1) head domain (subunits alpha(3) and beta(3)) - the catalytic core - and a membrane F(0) domain - the membrane proton channel (subunits c, a, 8, e, f, g, k and j). These two domains are linked by a central stalk (subunits gamma, delta, and epsilon) rotating inside the F1 region and a stationary peripheral stalk (subunits F6, b, d, and OSCP). Interacts with ATPAF2. Interacts with HRG; the interaction occurs on the surface of T-cells and alters the cell morphology when associated with concanavalin (in vitro). Interacts with PLG (angiostatin peptide); the interaction inhibits most of the angiogenic properties of angiostatin. Interacts with BLOC1S1. Interacts with BCL2L1 isoform BCL-X(L); the interaction mediates the association of BCL2L1 isoform BCL-X(L) with the mitochondrial membrane F(1)F(0) ATP synthase and enhances neurons metabolic efficiency. Interacts with CLN5 and PPT1. Interacts with S100A1; this interaction increases F1-ATPase activity. Interacts with ABCB7; this interaction allows the regulation of cellular iron homeostasis and cellular reactive oxygen species (ROS) levels in cardiomyocytes. In terms of processing, acetylated on lysine residues. BLOC1S1 is required for acetylation. As to expression, expressed in flagella of epididymal sperm.

It localises to the mitochondrion. The protein resides in the mitochondrion inner membrane. The protein localises to the cell membrane. In terms of biological role, subunit alpha, of the mitochondrial membrane ATP synthase complex (F(1)F(0) ATP synthase or Complex V) that produces ATP from ADP in the presence of a proton gradient across the membrane which is generated by electron transport complexes of the respiratory chain. ATP synthase complex consist of a soluble F(1) head domain - the catalytic core - and a membrane F(1) domain - the membrane proton channel. These two domains are linked by a central stalk rotating inside the F(1) region and a stationary peripheral stalk. During catalysis, ATP synthesis in the catalytic domain of F(1) is coupled via a rotary mechanism of the central stalk subunits to proton translocation. In vivo, can only synthesize ATP although its ATP hydrolase activity can be activated artificially in vitro. With the catalytic subunit beta (ATP5F1B), forms the catalytic core in the F(1) domain. Subunit alpha does not bear the catalytic high-affinity ATP-binding sites. This is ATP synthase F(1) complex subunit alpha, mitochondrial from Rattus norvegicus (Rat).